The primary structure comprises 614 residues: uncharacterized protein (614 aa).

Transmembrane regions (helical) follow at residues 494–516 and 552–574; these read VAYW…GSTL and LLIG…IVHA. Residues 588–614 are disordered; it reads AVRPRADKDIQTLTHRDEAEEDQEEDS. A compositionally biased stretch (basic and acidic residues) spans 591–605; it reads PRADKDIQTLTHRDE.

It is found in the cell membrane. This is an uncharacterized protein from Treponema pallidum (strain Nichols).